A 384-amino-acid chain; its full sequence is D-galactosamine-6-phosphate deaminase AgaS (384 aa).

SIS domains follow at residues Leu45–Phe197 and Ser215–Pro364.

It belongs to the SIS family. AgaS subfamily.

The enzyme catalyses D-galactosamine 6-phosphate + H2O = D-tagatopyranose 1-phosphate + NH4(+). In terms of biological role, catalyzes the isomerization-deamination of galactosamine 6-phosphate to form tagatofuranose 6-phosphate and ammonium ion. The sequence is that of D-galactosamine-6-phosphate deaminase AgaS from Escherichia coli.